The chain runs to 175 residues: NADH-ubiquinone oxidoreductase chain 6 (175 aa).

The next 5 membrane-spanning stretches (helical) occupy residues 1–21 (MMTY…VGFA), 25–45 (SPIY…AIVL), 47–67 (FGGS…MLVV), 88–108 (AVLA…CYIL), and 149–169 (YGTW…LVIM).

The protein belongs to the complex I subunit 6 family. As to quaternary structure, core subunit of respiratory chain NADH dehydrogenase (Complex I) which is composed of 45 different subunits.

It localises to the mitochondrion inner membrane. It carries out the reaction a ubiquinone + NADH + 5 H(+)(in) = a ubiquinol + NAD(+) + 4 H(+)(out). Functionally, core subunit of the mitochondrial membrane respiratory chain NADH dehydrogenase (Complex I) which catalyzes electron transfer from NADH through the respiratory chain, using ubiquinone as an electron acceptor. Essential for the catalytic activity and assembly of complex I. The polypeptide is NADH-ubiquinone oxidoreductase chain 6 (MT-ND6) (Canis lupus familiaris (Dog)).